Reading from the N-terminus, the 423-residue chain is Serine hydroxymethyltransferase (423 aa).

(6S)-5,6,7,8-tetrahydrofolate contacts are provided by residues Leu-120 and 124–126 (GHL). At Lys-229 the chain carries N6-(pyridoxal phosphate)lysine. (6S)-5,6,7,8-tetrahydrofolate-binding positions include Glu-245 and 353–355 (SPF).

It belongs to the SHMT family. Homodimer. The cofactor is pyridoxal 5'-phosphate.

The protein localises to the cytoplasm. The catalysed reaction is (6R)-5,10-methylene-5,6,7,8-tetrahydrofolate + glycine + H2O = (6S)-5,6,7,8-tetrahydrofolate + L-serine. The protein operates within one-carbon metabolism; tetrahydrofolate interconversion. It participates in amino-acid biosynthesis; glycine biosynthesis; glycine from L-serine: step 1/1. Catalyzes the reversible interconversion of serine and glycine with tetrahydrofolate (THF) serving as the one-carbon carrier. This reaction serves as the major source of one-carbon groups required for the biosynthesis of purines, thymidylate, methionine, and other important biomolecules. Also exhibits THF-independent aldolase activity toward beta-hydroxyamino acids, producing glycine and aldehydes, via a retro-aldol mechanism. The polypeptide is Serine hydroxymethyltransferase (Prochlorococcus marinus (strain MIT 9312)).